Consider the following 61-residue polypeptide: MARTSLVVKASREPKFSARKYNRCPICGRPRAFIRKFGICRICFRSMASMGKLPGVTKSSW.

Zn(2+) is bound by residues Cys24, Cys27, Cys40, and Cys43.

It belongs to the universal ribosomal protein uS14 family. Zinc-binding uS14 subfamily. As to quaternary structure, part of the 30S ribosomal subunit. Contacts proteins S3 and S10. It depends on Zn(2+) as a cofactor.

Its function is as follows. Binds 16S rRNA, required for the assembly of 30S particles and may also be responsible for determining the conformation of the 16S rRNA at the A site. This Desulfosudis oleivorans (strain DSM 6200 / JCM 39069 / Hxd3) (Desulfococcus oleovorans) protein is Small ribosomal subunit protein uS14.